A 173-amino-acid polypeptide reads, in one-letter code: Development-specific protein S (173 aa).

Beta/gamma crystallin 'Greek key' domains are found at residues Ala-2–Pro-46 and Val-48–Ser-86. Ca(2+)-binding residues include Tyr-8, Asn-37, Thr-38, Ser-40, Gln-54, Asn-77, Asn-78, and Ser-80. A connecting peptide region spans residues Val-87 to Gln-90. Beta/gamma crystallin 'Greek key' domains are found at residues Pro-91–Gly-135 and Leu-136–Ser-173.

This sequence belongs to the beta/gamma-crystallin family.

Functionally, protein S, induced in large amounts during fruiting body formation, assembles on the surface of myxospores in the presence of calcium ions. This is Development-specific protein S (tps) from Myxococcus xanthus.